A 394-amino-acid chain; its full sequence is Tubulin-like protein CetZ5 (394 aa).

GTP-binding positions include 10 to 14 (QAGGN), 110 to 112 (GTG), glutamate 142, asparagine 169, and asparagine 187.

Belongs to the CetZ family.

It is found in the cytoplasm. In terms of biological role, involved in cell shape control. The sequence is that of Tubulin-like protein CetZ5 from Haloferax volcanii (strain ATCC 29605 / DSM 3757 / JCM 8879 / NBRC 14742 / NCIMB 2012 / VKM B-1768 / DS2) (Halobacterium volcanii).